A 209-amino-acid polypeptide reads, in one-letter code: Small ribosomal subunit protein uS4 (209 aa).

The disordered stretch occupies residues 23-46 (SRNPLLKKPHPPGQHGMQRKKKSD). An S4 RNA-binding domain is found at 93 to 156 (CRLDNMVYRM…RKLQSVQESL (64 aa)).

This sequence belongs to the universal ribosomal protein uS4 family. Part of the 30S ribosomal subunit. Contacts protein S5. The interaction surface between S4 and S5 is involved in control of translational fidelity.

One of the primary rRNA binding proteins, it binds directly to 16S rRNA where it nucleates assembly of the body of the 30S subunit. Functionally, with S5 and S12 plays an important role in translational accuracy. The chain is Small ribosomal subunit protein uS4 from Chlamydia felis (strain Fe/C-56) (Chlamydophila felis).